The sequence spans 259 residues: Small ribosomal subunit protein uS2 (259 aa).

Positions Val234–Val259 are disordered. Over residues Thr250 to Val259 the composition is skewed to acidic residues.

Belongs to the universal ribosomal protein uS2 family.

The polypeptide is Small ribosomal subunit protein uS2 (Sulfurimonas denitrificans (strain ATCC 33889 / DSM 1251) (Thiomicrospira denitrificans (strain ATCC 33889 / DSM 1251))).